Reading from the N-terminus, the 407-residue chain is Methylenetetrahydrofolate--tRNA-(uracil-5-)-methyltransferase TrmFO (407 aa).

9-14 serves as a coordination point for FAD; it reads GAGLAG.

This sequence belongs to the MnmG family. TrmFO subfamily. It depends on FAD as a cofactor.

It localises to the cytoplasm. It carries out the reaction uridine(54) in tRNA + (6R)-5,10-methylene-5,6,7,8-tetrahydrofolate + NADH + H(+) = 5-methyluridine(54) in tRNA + (6S)-5,6,7,8-tetrahydrofolate + NAD(+). The enzyme catalyses uridine(54) in tRNA + (6R)-5,10-methylene-5,6,7,8-tetrahydrofolate + NADPH + H(+) = 5-methyluridine(54) in tRNA + (6S)-5,6,7,8-tetrahydrofolate + NADP(+). Catalyzes the folate-dependent formation of 5-methyl-uridine at position 54 (M-5-U54) in all tRNAs. This chain is Methylenetetrahydrofolate--tRNA-(uracil-5-)-methyltransferase TrmFO, found in Lactobacillus helveticus (strain DPC 4571).